The chain runs to 280 residues: Probable cell division protein WhiA (280 aa).

The segment at residues 247 to 279 (SLEQIANFFFTKYNIKISRSGIQHFSVNLKKLC) is a DNA-binding region (H-T-H motif).

It belongs to the WhiA family.

Involved in cell division and chromosome segregation. This is Probable cell division protein WhiA from Mycoplasma genitalium (strain ATCC 33530 / DSM 19775 / NCTC 10195 / G37) (Mycoplasmoides genitalium).